We begin with the raw amino-acid sequence, 141 residues long: Hemoglobin subunit alpha-A (141 aa).

A Globin domain is found at 1-141 (VLSASDKANV…VGTVLTAKYR (141 aa)). His58 is an O2 binding site. His87 contributes to the heme b binding site.

The protein belongs to the globin family. In terms of assembly, heterotetramer of two alpha chains and two beta chains. In terms of tissue distribution, red blood cells.

Functionally, involved in oxygen transport from the lung to the various peripheral tissues. This is Hemoglobin subunit alpha-A (HBAA) from Sturnus vulgaris (Starling).